A 150-amino-acid chain; its full sequence is Holo-[acyl-carrier-protein] synthase (150 aa).

Mg(2+) contacts are provided by Asp8 and Glu57.

The protein belongs to the P-Pant transferase superfamily. AcpS family. It depends on Mg(2+) as a cofactor.

It localises to the cytoplasm. The enzyme catalyses apo-[ACP] + CoA = holo-[ACP] + adenosine 3',5'-bisphosphate + H(+). Transfers the 4'-phosphopantetheine moiety from coenzyme A to a Ser of acyl-carrier-protein. This Jannaschia sp. (strain CCS1) protein is Holo-[acyl-carrier-protein] synthase.